The chain runs to 89 residues: uncharacterized protein (89 aa).

It to Rhizobium NGR234A y4oN.

This is an uncharacterized protein from Sinorhizobium fredii (strain NBRC 101917 / NGR234).